Reading from the N-terminus, the 145-residue chain is Ribosome maturation factor RimP (145 aa).

This sequence belongs to the RimP family.

The protein localises to the cytoplasm. Its function is as follows. Required for maturation of 30S ribosomal subunits. This chain is Ribosome maturation factor RimP, found in Borreliella burgdorferi (strain ATCC 35210 / DSM 4680 / CIP 102532 / B31) (Borrelia burgdorferi).